The chain runs to 546 residues: Methionine--tRNA ligase (546 aa).

The 'HIGH' region motif lies at 15 to 25 (PYANGPIHLGH). Zn(2+)-binding residues include C146, C149, C159, and C162. The short motif at 332 to 336 (KMSKS) is the 'KMSKS' region element. K335 is an ATP binding site.

It belongs to the class-I aminoacyl-tRNA synthetase family. MetG type 1 subfamily. As to quaternary structure, monomer. The cofactor is Zn(2+).

It is found in the cytoplasm. The enzyme catalyses tRNA(Met) + L-methionine + ATP = L-methionyl-tRNA(Met) + AMP + diphosphate. Its function is as follows. Is required not only for elongation of protein synthesis but also for the initiation of all mRNA translation through initiator tRNA(fMet) aminoacylation. The protein is Methionine--tRNA ligase of Coxiella burnetii (strain RSA 331 / Henzerling II).